A 101-amino-acid chain; its full sequence is MIPGEIMAAPGDITLNAGATPLTLTVSNTGDRPVQVGSHYHFAETNAGLSFDRDAARGMRLDIAAGTAVRFEPGQTRDITLVPFGGARKIYGFNQGIMGAL.

This sequence belongs to the urease beta subunit family. In terms of assembly, heterotrimer of UreA (gamma), UreB (beta) and UreC (alpha) subunits. Three heterotrimers associate to form the active enzyme.

The protein resides in the cytoplasm. It carries out the reaction urea + 2 H2O + H(+) = hydrogencarbonate + 2 NH4(+). It functions in the pathway nitrogen metabolism; urea degradation; CO(2) and NH(3) from urea (urease route): step 1/1. The protein is Urease subunit beta of Dinoroseobacter shibae (strain DSM 16493 / NCIMB 14021 / DFL 12).